A 312-amino-acid polypeptide reads, in one-letter code: Methionyl-tRNA formyltransferase (312 aa).

Residue 113–116 (SLLP) participates in (6S)-5,6,7,8-tetrahydrofolate binding.

Belongs to the Fmt family.

It carries out the reaction L-methionyl-tRNA(fMet) + (6R)-10-formyltetrahydrofolate = N-formyl-L-methionyl-tRNA(fMet) + (6S)-5,6,7,8-tetrahydrofolate + H(+). Functionally, attaches a formyl group to the free amino group of methionyl-tRNA(fMet). The formyl group appears to play a dual role in the initiator identity of N-formylmethionyl-tRNA by promoting its recognition by IF2 and preventing the misappropriation of this tRNA by the elongation apparatus. The chain is Methionyl-tRNA formyltransferase from Francisella philomiragia subsp. philomiragia (strain ATCC 25017 / CCUG 19701 / FSC 153 / O#319-036).